The chain runs to 210 residues: Thymidylate kinase (210 aa).

10-17 contributes to the ATP binding site; that stretch reads GPEGAGKS.

This sequence belongs to the thymidylate kinase family.

It carries out the reaction dTMP + ATP = dTDP + ADP. Phosphorylation of dTMP to form dTDP in both de novo and salvage pathways of dTTP synthesis. This is Thymidylate kinase from Pseudomonas fluorescens (strain ATCC BAA-477 / NRRL B-23932 / Pf-5).